The sequence spans 284 residues: MQNQVIQLGNIEIGNNKPFVLFGGMNVLESRDMAMQVCEKYVEVTQKLGVPYIFKASFDKANRSSIHSYRGPGMEEGLKIFQELKETFGVKVITDVHEIYQCRPVAEVVDIIQLPAFLARQTDLVEAMARTGAVINVKKPQFLSPGQIGNIVEKIAECGNNKVILCDRGTNFGYDNLVVDMLGFNIMKKVSQGCPVIFDVTHSLQCRDPFGAASGGRRDQVTELARSGMAIGLAGLFLESHPNPNQAKCDGPSALPLSKLEPFIAQMKAIDDLVKSFEEIDTSN.

This sequence belongs to the KdsA family.

The protein localises to the cytoplasm. The catalysed reaction is D-arabinose 5-phosphate + phosphoenolpyruvate + H2O = 3-deoxy-alpha-D-manno-2-octulosonate-8-phosphate + phosphate. Its pathway is carbohydrate biosynthesis; 3-deoxy-D-manno-octulosonate biosynthesis; 3-deoxy-D-manno-octulosonate from D-ribulose 5-phosphate: step 2/3. The protein operates within bacterial outer membrane biogenesis; lipopolysaccharide biosynthesis. In Histophilus somni (strain 129Pt) (Haemophilus somnus), this protein is 2-dehydro-3-deoxyphosphooctonate aldolase.